The primary structure comprises 532 residues: L-proline--[L-prolyl-carrier protein] ligase (532 aa).

Residues 510 to 532 are disordered; that stretch reads KTDYRRLGLDAPPRPAAPLGTAR.

The protein belongs to the ATP-dependent AMP-binding enzyme family.

The enzyme catalyses holo-[peptidyl-carrier protein] + L-proline + ATP = L-prolyl-[peptidyl-carrier protein] + AMP + diphosphate. Functionally, involved in the biosynthesis of undecylprodigiosin. Catalyzes the conversion of L-proline to L-prolyl-AMP and the transfer of the L-prolyl group to acyl carrier protein RedO. The protein is L-proline--[L-prolyl-carrier protein] ligase of Streptomyces coelicolor (strain ATCC BAA-471 / A3(2) / M145).